We begin with the raw amino-acid sequence, 272 residues long: 5'-nucleotidase SurE (272 aa).

4 residues coordinate a divalent metal cation: D8, D9, S39, and N96.

It belongs to the SurE nucleotidase family. The cofactor is a divalent metal cation.

The protein localises to the cytoplasm. It carries out the reaction a ribonucleoside 5'-phosphate + H2O = a ribonucleoside + phosphate. In terms of biological role, nucleotidase that shows phosphatase activity on nucleoside 5'-monophosphates. In Heliobacterium modesticaldum (strain ATCC 51547 / Ice1), this protein is 5'-nucleotidase SurE.